The chain runs to 205 residues: SCO2-like protein RC0895 (205 aa).

Cu cation contacts are provided by C82, C86, and H172.

Belongs to the SCO1/2 family.

This Rickettsia conorii (strain ATCC VR-613 / Malish 7) protein is SCO2-like protein RC0895.